Reading from the N-terminus, the 321-residue chain is Reticulon-2 (321 aa).

2 disordered regions span residues 1-36 (MGHV…SPVT) and 65-85 (PPVR…PREE). A Reticulon domain is found at 134–321 (VKDLLYWRDI…TVKKPPAKQK (188 aa)). The next 2 membrane-spanning stretches (helical) occupy residues 163–183 (FSVI…TLTL) and 250–270 (FLVI…ITVL).

The protein resides in the endoplasmic reticulum membrane. Its subcellular location is the sarcoplasmic reticulum membrane. The protein localises to the cell membrane. It is found in the sarcolemma. It localises to the T-tubule. The protein resides in the cytoplasm. Its subcellular location is the myofibril. The protein localises to the sarcomere. It is found in the z line. It localises to the cytoskeleton. Its function is as follows. Inhibits amyloid precursor protein processing, probably by blocking BACE1 activity. Enhances trafficking of the glutamate transporter SLC1A1/EAAC1 from the endoplasmic reticulum to the cell surface. Plays a role in the translocation of SLC2A4/GLUT4 from intracellular membranes to the cell membrane which facilitates the uptake of glucose into the cell. The sequence is that of Reticulon-2 from Xenopus tropicalis (Western clawed frog).